Here is a 118-residue protein sequence, read N- to C-terminus: Small ribosomal subunit protein uS13 (118 aa).

The interval 94–118 is disordered; the sequence is SLPLRGQRTKTNARTRKGPRKPIKR.

This sequence belongs to the universal ribosomal protein uS13 family. As to quaternary structure, part of the 30S ribosomal subunit. Forms a loose heterodimer with protein S19. Forms two bridges to the 50S subunit in the 70S ribosome.

In terms of biological role, located at the top of the head of the 30S subunit, it contacts several helices of the 16S rRNA. In the 70S ribosome it contacts the 23S rRNA (bridge B1a) and protein L5 of the 50S subunit (bridge B1b), connecting the 2 subunits; these bridges are implicated in subunit movement. Contacts the tRNAs in the A and P-sites. The protein is Small ribosomal subunit protein uS13 of Photobacterium profundum (strain SS9).